A 516-amino-acid polypeptide reads, in one-letter code: Nucleolar complex protein 4 homolog (516 aa).

3 consecutive transmembrane segments (helical) span residues 296-316 (SACD…FILI), 347-367 (FFHL…LVAA), and 375-395 (LALT…CNLL).

It belongs to the CBF/MAK21 family.

It is found in the nucleus membrane. It localises to the nucleus. The protein localises to the nucleolus. This is Nucleolar complex protein 4 homolog (Noc4l) from Rattus norvegicus (Rat).